Here is a 64-residue protein sequence, read N- to C-terminus: Small ribosomal subunit protein eS17 (64 aa).

The protein belongs to the eukaryotic ribosomal protein eS17 family.

This Methanosarcina mazei (strain ATCC BAA-159 / DSM 3647 / Goe1 / Go1 / JCM 11833 / OCM 88) (Methanosarcina frisia) protein is Small ribosomal subunit protein eS17.